The sequence spans 140 residues: ATP synthase epsilon chain (140 aa).

Belongs to the ATPase epsilon chain family. F-type ATPases have 2 components, CF(1) - the catalytic core - and CF(0) - the membrane proton channel. CF(1) has five subunits: alpha(3), beta(3), gamma(1), delta(1), epsilon(1). CF(0) has three main subunits: a, b and c.

The protein localises to the cell inner membrane. Functionally, produces ATP from ADP in the presence of a proton gradient across the membrane. The polypeptide is ATP synthase epsilon chain (atpC) (Vibrio alginolyticus).